The chain runs to 300 residues: Type II restriction enzyme HindIII (300 aa).

The enzyme catalyses Endonucleolytic cleavage of DNA to give specific double-stranded fragments with terminal 5'-phosphates.. In terms of biological role, a P subtype restriction enzyme that recognizes the double-stranded sequence 5'-AAGCTT-3' and cleaves after A-1. This chain is Type II restriction enzyme HindIII, found in Haemophilus influenzae (strain ATCC 51907 / DSM 11121 / KW20 / Rd).